Reading from the N-terminus, the 154-residue chain is Small ribosomal subunit protein uS7 (154 aa).

It belongs to the universal ribosomal protein uS7 family.

The chain is Small ribosomal subunit protein uS7 (RPS5) from Nicotiana plumbaginifolia (Leadwort-leaved tobacco).